The sequence spans 117 residues: Prefoldin subunit beta (117 aa).

Belongs to the prefoldin subunit beta family. Heterohexamer of two alpha and four beta subunits.

The protein resides in the cytoplasm. Molecular chaperone capable of stabilizing a range of proteins. Seems to fulfill an ATP-independent, HSP70-like function in archaeal de novo protein folding. This chain is Prefoldin subunit beta, found in Thermococcus kodakarensis (strain ATCC BAA-918 / JCM 12380 / KOD1) (Pyrococcus kodakaraensis (strain KOD1)).